The following is a 438-amino-acid chain: Dol-P-Man:Man(5)GlcNAc(2)-PP-Dol alpha-1,3-mannosyltransferase (438 aa).

Residue Ser13 is modified to Phosphoserine. 11 helical membrane passes run Tyr41–Ile61, Thr95–Thr115, Met123–Tyr143, Val149–Val169, Leu172–Gln192, Leu203–Leu223, Ala231–Leu251, Phe289–Trp309, Pro332–Phe352, Leu356–Pro376, and Ala407–Phe427.

The protein belongs to the glycosyltransferase ALG3 family.

The protein localises to the endoplasmic reticulum membrane. The catalysed reaction is an alpha-D-Man-(1-&gt;2)-alpha-D-Man-(1-&gt;2)-alpha-D-Man-(1-&gt;3)-[alpha-D-Man-(1-&gt;6)]-beta-D-Man-(1-&gt;4)-beta-D-GlcNAc-(1-&gt;4)-alpha-D-GlcNAc-diphospho-di-trans,poly-cis-dolichol + a di-trans,poly-cis-dolichyl beta-D-mannosyl phosphate = an alpha-D-Man-(1-&gt;2)-alpha-D-Man-(1-&gt;2)-alpha-D-Man-(1-&gt;3)-[alpha-D-Man-(1-&gt;3)-alpha-D-Man-(1-&gt;6)]-beta-D-Man-(1-&gt;4)-beta-D-GlcNAc-(1-&gt;4)-alpha-D-GlcNAc-diphospho-di-trans,poly-cis-dolichol + a di-trans,poly-cis-dolichyl phosphate + H(+). The protein operates within protein modification; protein glycosylation. Its function is as follows. Dol-P-Man:Man(5)GlcNAc(2)-PP-Dol alpha-1,3-mannosyltransferase that operates in the biosynthetic pathway of dolichol-linked oligosaccharides, the glycan precursors employed in protein asparagine (N)-glycosylation. The assembly of dolichol-linked oligosaccharides begins on the cytosolic side of the endoplasmic reticulum membrane and finishes in its lumen. The sequential addition of sugars to dolichol pyrophosphate produces dolichol-linked oligosaccharides containing fourteen sugars, including two GlcNAcs, nine mannoses and three glucoses. Once assembled, the oligosaccharide is transferred from the lipid to nascent proteins by oligosaccharyltransferases. In the lumen of the endoplasmic reticulum, adds the first dolichyl beta-D-mannosyl phosphate derived mannose in an alpha-1,3 linkage to Man(5)GlcNAc(2)-PP-dolichol to produce Man(6)GlcNAc(2)-PP-dolichol. Man(6)GlcNAc(2)-PP-dolichol is a substrate for ALG9, the following enzyme in the biosynthetic pathway. This Homo sapiens (Human) protein is Dol-P-Man:Man(5)GlcNAc(2)-PP-Dol alpha-1,3-mannosyltransferase.